The primary structure comprises 561 residues: Transcription factor Clamp (561 aa).

Residues 127 to 149 (FKCDVCSDMFPHLALLNAHKRMH) form a C2H2-type 1 zinc finger. Cys129, Cys132, His145, and His149 together coordinate Zn(2+). Positions 290–315 (TGGTTPKREASSGSGHHPVKKRNSQQ) are disordered. C2H2-type zinc fingers lie at residues 360 to 382 (FSCNICGGLFSRYSSLWSHKKLH), 388 to 410 (YKCSICGLAFAKAVYLKNHARIH), 416 to 438 (YKCQTCGMQFSQSPHLKNHERTH), 444 to 466 (YVCGVCDKGFARHATLWNHRRIH), 472 to 494 (YKCEICGSAFSQAAHLKNHAKVH), and 500 to 522 (YKCEICSAAFADRFALKRHRGIH).

In terms of assembly, homodimer. Interacts with msl-2; promoting recruitment of the male-specific lethal (MSL) histone acetyltransferase complex to chromatin. Interacts with Nelf-A. Interacts with NELF-B.

It localises to the nucleus. Its subcellular location is the chromosome. Transcription factor involved in X-chromosome dosage compensation in males, the process by which transcription of the single X chromosome in the male is elevated. Binds to the DNA sequence (GA)n. Clamp-binding promotes nucleosome depletion and chromatin accessibility, thereby allowing access to other transcription factors. Specifically binds to cis-acting elements on the X-chromosome named chromatin entry sites and promotes recruitment of the male-specific lethal (MSL) histone acetyltransferase complex, which associates with actively transcribed genes on the male X-chromosome to upregulate their expression. Mechanistically, acts by promoting chromatin accessibility at chromatin entry sites, facilitating DNA-binding of msl-2, followed by MSL complex recruitment. In addition to dosage compensation, also involved in zygotic genome activation (ZGA), a critical event in early embryonic development during which the developmental control passes from maternally provided mRNAs to the expression of the zygotic genome after fertilization. Maternally-provided protein cooperates with Zelda (zld) to activate zygotic transcription by increasing chromatin accessibility at promoters of specific genes and facilitate zld occupancy at a subset of key embryonic promoters. Also acts as an activator of gypsy chromatin insulator function by promoting binding of Cp190 to chromatin. The polypeptide is Transcription factor Clamp (Drosophila melanogaster (Fruit fly)).